Here is a 229-residue protein sequence, read N- to C-terminus: Large ribosomal subunit protein uL1 (229 aa).

It belongs to the universal ribosomal protein uL1 family. As to quaternary structure, part of the 50S ribosomal subunit.

In terms of biological role, binds directly to 23S rRNA. The L1 stalk is quite mobile in the ribosome, and is involved in E site tRNA release. Functionally, protein L1 is also a translational repressor protein, it controls the translation of the L11 operon by binding to its mRNA. This Histophilus somni (strain 2336) (Haemophilus somnus) protein is Large ribosomal subunit protein uL1.